We begin with the raw amino-acid sequence, 168 residues long: MEPPNLYPVKLYVYDLSKGLARRLSPIMLGKQLEGIWHTSIVVHKDEFFFGSGGISSCPPGGTLLGPPDSVVDVGSTEVTEEIFLEYLSSLGESLFRGEAYNLFEHNCNTFSNEVAQFLTGRKIPSYITDLPSEVLSTPFGQALRPLLDSIQIQPPGGSSVGRPNGQS.

In terms of domain architecture, PPPDE spans 7–149 (YPVKLYVYDL…FGQALRPLLD (143 aa)). His-38 is a catalytic residue. Positions 83–91 (IFLEYLSSL) match the Nuclear export signal 1 motif. Residue Cys-108 is part of the active site. The short motif at 139 to 153 (PFGQALRPLLDSIQI) is the Nuclear export signal 2 element.

This sequence belongs to the DeSI family. As to quaternary structure, homodimer. Interacts with UBQLN4; leading to the export of UBQLN4 from the nucleus.

The protein localises to the cytoplasm. The protein resides in the nucleus. It carries out the reaction S-hexadecanoyl-L-cysteinyl-[protein] + H2O = L-cysteinyl-[protein] + hexadecanoate + H(+). With respect to regulation, palmostatin B inhibits its palmitoyl protein thioesterase activity. Its function is as follows. Protease which deconjugates SUMO1, SUMO2 and SUMO3 from some substrate proteins. Has isopeptidase but not SUMO-processing activity. Desumoylates ZBTB46. Collaborates with UBQLN4 in the export of ubiquitinated proteins from the nucleus to the cytoplasm. Exhibits palmitoyl protein thioesterase (S-depalmitoylation) activity towards synthetic substrates 4-methylumbelliferyl-6-S-palmitoyl-beta-D-glucopyranoside and S-depalmitoylation probe 5 (DPP-5). In Homo sapiens (Human), this protein is Desumoylating isopeptidase 1.